Reading from the N-terminus, the 328-residue chain is D-cysteine desulfhydrase (328 aa).

Lysine 51 carries the N6-(pyridoxal phosphate)lysine modification.

This sequence belongs to the ACC deaminase/D-cysteine desulfhydrase family. As to quaternary structure, homodimer. The cofactor is pyridoxal 5'-phosphate.

It carries out the reaction D-cysteine + H2O = hydrogen sulfide + pyruvate + NH4(+) + H(+). Catalyzes the alpha,beta-elimination reaction of D-cysteine and of several D-cysteine derivatives. It could be a defense mechanism against D-cysteine. The polypeptide is D-cysteine desulfhydrase (Escherichia coli (strain UTI89 / UPEC)).